The sequence spans 191 residues: Peptide methionine sulfoxide reductase MsrA (191 aa).

Residue Cys21 is part of the active site.

The protein belongs to the MsrA Met sulfoxide reductase family.

The enzyme catalyses L-methionyl-[protein] + [thioredoxin]-disulfide + H2O = L-methionyl-(S)-S-oxide-[protein] + [thioredoxin]-dithiol. The catalysed reaction is [thioredoxin]-disulfide + L-methionine + H2O = L-methionine (S)-S-oxide + [thioredoxin]-dithiol. In terms of biological role, has an important function as a repair enzyme for proteins that have been inactivated by oxidation. Catalyzes the reversible oxidation-reduction of methionine sulfoxide in proteins to methionine. This is Peptide methionine sulfoxide reductase MsrA from Ralstonia nicotianae (strain ATCC BAA-1114 / GMI1000) (Ralstonia solanacearum).